The sequence spans 1134 residues: Ankyrin repeat and SAM domain-containing protein 1A (1134 aa).

At Gly2 the chain carries N-acetylglycine. Gly residues predominate over residues 33-55 (GGGGGGGSGGGGGGSGGGGGGLG). The segment at 33–57 (GGGGGGGSGGGGGGSGGGGGGLGSS) is disordered. ANK repeat units follow at residues 79–108 (TGYT…LTNV), 112–141 (KGCY…SHTR), 148–177 (DNET…DPTM), 181–210 (KFET…NLLS), 214–243 (KKHT…DSNY), and 246–275 (EMGS…DVNI). Residues 305–317 (HMTGKRSTKEVDK) show a composition bias toward basic and acidic residues. Disordered regions lie at residues 305 to 338 (HMTG…KSQG), 375 to 422 (SMAS…EEDH), and 469 to 498 (VDGK…VPEQ). The residue at position 318 (Thr318) is a Phosphothreonine. Residues 328–337 (SMDSISQKSQ) are compositionally biased toward polar residues. Positions 382 to 392 (SDQDSTNKEAE) are enriched in basic and acidic residues. Ser507 bears the Phosphoserine mark. Residues 569-650 (LTGLPTTNSR…MGSRSESLSN (82 aa)) form a disordered region. Positions 572–588 (LPTTNSRSHPETLTHTA) are enriched in polar residues. Positions 613 to 628 (PKAELKLSRSLSKSDS) are enriched in basic and acidic residues. Ser620, Ser622, Ser624, Ser626, Ser628, Ser647, Ser661, Ser663, Ser666, and Ser677 each carry phosphoserine. Residues 633 to 650 (CSPTEDATMGSRSESLSN) show a composition bias toward polar residues. SAM domains are found at residues 696–762 (TLEQ…LPKV) and 770–837 (NSPP…YEEP). Over residues 856 to 868 (TSSPLSQNDSCTG) the composition is skewed to polar residues. Disordered stretches follow at residues 856–896 (TSSP…APSR) and 1079–1134 (AEMI…LSTN). Position 887 is a phosphoserine (Ser887). The region spanning 936–1091 (IFESCGYEAN…IETKSSKPVP (156 aa)) is the PID domain. The span at 1123–1134 (PKPDSKRSLSTN) shows a compositional bias: basic and acidic residues.

In terms of assembly, interacts (via SAM domain) with EPHA2 (via SAM domain). Interacts with EPHA8; EPHA8 kinase activity-independent but stimulated by EPHA8 ubiquitination. Interacts (via SAM domain) with EPHA6 (via SAM domain). Phosphorylated on tyrosine residues in response to EGF and PDGF. As to expression, widely expressed (at protein level).

The protein localises to the cytoplasm. It is found in the cell projection. Its function is as follows. Regulator of different signaling pathways. Regulates EPHA8 receptor tyrosine kinase signaling to control cell migration and neurite retraction. This chain is Ankyrin repeat and SAM domain-containing protein 1A (ANKS1A), found in Homo sapiens (Human).